We begin with the raw amino-acid sequence, 1284 residues long: MKSTAESKETPSQDESTTSVPCTEAPLVEEGEEASFGAYKRIFTFAGRTELILQAVAILAACASGAGIALQNLIFGQFVTVITDFTNGISTPADFRDNAAELALYFVYLGIARLVLSYTYNTLLTYAAYRIVRNIRHAYLKAALSQEVAYYDFGSGGSIAAQATSNGKLIQAGASDKIGLLFQGLAAFVTAFIIAFVVQWKLTLICICIPVATIGTTGVVAAVEAGHETRILQIHAQANSFAEGILAGVKAVHAFGMRDSLVRKFDEYLVEAHKVGKKISPLLGLLFSAEYTIIYLGYGLAFWQGIHMFGRGEIGTAGDIFTVLLSVVIASINLTLLAPYSIEFSRAASAAAQLFRLIDRESEINPYGKEGLEPERVLGDVELENVTFSYPTRPGITVLDNFSLKVPAGKVTALVGQSGSGKSTIVGLLERWYNPTSGAIRLDGNLISELNVGWLRRNVRLVQQEPVLFQGSVFDNIRYGLVGTPWENASREEQMERVQEAAKLAYAHEFISELTDGYDTLIGERGGLLSGGQKQRVAIARSVVSQPKVLLLDEATSALDPHAETIVQKALDKAAEGRTTIVIAHKLATIRKADNIVVMSKGHIVEQGTHESLIAKDGVYAGLVKIQNLAVNASAHDNVNEEGEGEDVALLEVTETAVTRYPTSIRGRMNSIKDRDDYENHKHMDMLAALAYLVRECPELKWAYLVVLLGCLGGCAMYPGQAILMSRVVEVFTLSGDAMLDKGDFYASMLIVLAAGCLICYLAVGYATNTIAQHLSHWFRRLILHDMLRQDIQFFDREENTTGALVSRIDSYPHAILELMGYNIALVVIAVLQVVTCGILAIAFSWKLGLVVVFGGIPPLVGAGMVRIRVDSRLDRQTSKKYGTSSSIASEAVNAIRTVSSLAIEETVLRRYTEELDHAVSSSVKPMAATMICFGLTQCIEYWFQALGFWYGCRLVSLGETSMYSFFVAFLSVFFAGQASAQLFQWSTSITKGINATNYIAWLHQLQPTVRETPENHDKGPGSGAPIAMDNVRFSYPLRPDAPILKGVNLKINKGQFIAFVGSSGCGKSTMIAMLERFYDPTTGSITIDASTLTDINPISYRNIVALVQQEPTLFQGTIRDNISLGVFNPNTQPFFSDKDAVKSVSDEQIESALRAANAWDFVSSLPQGIYTPAGSGGSQLSGGQRQRIAIARALIRDPKILLLDEATSALDTESEKIVQKALEGAARDGDRLTVAVAHRLSTIKDANVICVFFGGKIAEMGTHQELIVRGGLYRRMCEAQALD.

A compositionally biased stretch (basic and acidic residues) spans 1 to 11 (MKSTAESKETP). The tract at residues 1–24 (MKSTAESKETPSQDESTTSVPCTE) is disordered. 6 helical membrane passes run 55–75 (AVAI…NLIF), 99–119 (AAEL…LSYT), 178–198 (IGLL…AFVV), 203–223 (TLIC…VAAV), 282–302 (LLGL…GLAF), and 320–340 (IFTV…LAPY). The ABC transmembrane type-1 1 domain maps to 55 to 346 (AVAILAACAS…LAPYSIEFSR (292 aa)). Residues 381 to 626 (VELENVTFSY…DGVYAGLVKI (246 aa)) enclose the ABC transporter 1 domain. N-linked (GlcNAc...) asparagine glycans are attached at residues Asn-385 and Asn-401. Residue 416 to 423 (GQSGSGKS) participates in ATP binding. N-linked (GlcNAc...) asparagine glycans are attached at residues Asn-488 and Asn-632. 2 helical membrane-spanning segments follow: residues 705-725 (LVVL…AILM) and 745-765 (FYAS…LAVG). The ABC transmembrane type-1 2 domain maps to 705–992 (LVVLLGCLGG…LFQWSTSITK (288 aa)). The N-linked (GlcNAc...) asparagine glycan is linked to Asn-800. A run of 4 helical transmembrane segments spans residues 824-844 (IALV…AIAF), 846-866 (WKLG…AGMV), 931-951 (MICF…GFWY), and 955-975 (LVSL…SVFF). Asn-995 carries N-linked (GlcNAc...) asparagine glycosylation. Residues 1027–1280 (IAMDNVRFSY…GGLYRRMCEA (254 aa)) form the ABC transporter 2 domain. 1062–1069 (GSSGCGKS) contacts ATP. The N-linked (GlcNAc...) asparagine glycan is linked to Asn-1122.

It belongs to the ABC transporter superfamily. ABCB family. Multidrug resistance exporter (TC 3.A.1.201) subfamily.

It is found in the cell membrane. Its function is as follows. Pleiotropic ABC efflux transporter involved in the protection of the cells against a wide range of toxic compounds. This is ABC multidrug transporter atrC from Emericella nidulans (strain FGSC A4 / ATCC 38163 / CBS 112.46 / NRRL 194 / M139) (Aspergillus nidulans).